A 185-amino-acid chain; its full sequence is Ribosome-recycling factor (185 aa).

This sequence belongs to the RRF family.

The protein resides in the cytoplasm. In terms of biological role, responsible for the release of ribosomes from messenger RNA at the termination of protein biosynthesis. May increase the efficiency of translation by recycling ribosomes from one round of translation to another. The sequence is that of Ribosome-recycling factor from Arthrobacter sp. (strain FB24).